Reading from the N-terminus, the 151-residue chain is Deoxyuridine 5'-triphosphate nucleotidohydrolase (151 aa).

Residues 70 to 72 (RSG), N83, 87 to 89 (LID), and M97 each bind substrate.

This sequence belongs to the dUTPase family. The cofactor is Mg(2+).

The catalysed reaction is dUTP + H2O = dUMP + diphosphate + H(+). Its pathway is pyrimidine metabolism; dUMP biosynthesis; dUMP from dCTP (dUTP route): step 2/2. This enzyme is involved in nucleotide metabolism: it produces dUMP, the immediate precursor of thymidine nucleotides and it decreases the intracellular concentration of dUTP so that uracil cannot be incorporated into DNA. The chain is Deoxyuridine 5'-triphosphate nucleotidohydrolase from Pseudomonas syringae pv. syringae (strain B728a).